We begin with the raw amino-acid sequence, 339 residues long: 3-isopropylmalate dehydrogenase (339 aa).

Residues arginine 88, arginine 98, arginine 122, and aspartate 212 each coordinate substrate. Residues aspartate 212, aspartate 236, and aspartate 240 each contribute to the Mg(2+) site. NAD(+) is bound at residue 272–284 (GSAPDIAGKGIAD).

It belongs to the isocitrate and isopropylmalate dehydrogenases family. LeuB type 2 subfamily. As to quaternary structure, homodimer. Requires Mg(2+) as cofactor. It depends on Mn(2+) as a cofactor.

The protein resides in the cytoplasm. It carries out the reaction (2R,3S)-3-isopropylmalate + NAD(+) = 4-methyl-2-oxopentanoate + CO2 + NADH. The protein operates within amino-acid biosynthesis; L-leucine biosynthesis; L-leucine from 3-methyl-2-oxobutanoate: step 3/4. In terms of biological role, catalyzes the oxidation of 3-carboxy-2-hydroxy-4-methylpentanoate (3-isopropylmalate) to 3-carboxy-4-methyl-2-oxopentanoate. The product decarboxylates to 4-methyl-2 oxopentanoate. The sequence is that of 3-isopropylmalate dehydrogenase from Corynebacterium aurimucosum (strain ATCC 700975 / DSM 44827 / CIP 107346 / CN-1) (Corynebacterium nigricans).